The primary structure comprises 448 residues: NK1 transcription factor-related protein 1 (448 aa).

The span at 1 to 13 (MSASGPEAPGDIP) shows a compositional bias: low complexity. Disordered stretches follow at residues 1 to 80 (MSAS…LRPT), 115 to 299 (ASAP…PRRA), and 350 to 397 (KWKK…GAPL). Over residues 14 to 30 (ALPPPPQPGSGPAPPAP) the composition is skewed to pro residues. Low complexity-rich tracts occupy residues 62–79 (PAAP…PLRP) and 115–129 (ASAP…SGRP). Basic and acidic residues predominate over residues 130-139 (PRAEELERRA). Positions 186 to 203 (SGDEVPDDEDDDEDEAPE) are enriched in acidic residues. The span at 205-214 (EAARGAEEAR) shows a compositional bias: basic and acidic residues. Gly residues-rich tracts occupy residues 215–227 (GGGG…GSGC) and 259–270 (PPGGAAAPGGAG). The segment covering 271 to 280 (TTPQGTATAA) has biased composition (low complexity). Positions 296–355 (PRRARTAFTYEQLVALENKFKATRYLSVCERLNLALSLSLTETQVKIWFQNRRTKWKKQN) form a DNA-binding region, homeobox. Over residues 364–382 (TGGGGGPGPGAGPGTGLPG) the composition is skewed to gly residues.

Belongs to the NK-1 homeobox family. Expressed in hemopoietic progenitor cells.

The protein resides in the nucleus. May be required for the coordinated crosstalk of factors involved in the maintenance of energy homeostasis, possibly by regulating the transcription of specific factors involved in energy balance. This is NK1 transcription factor-related protein 1 from Homo sapiens (Human).